The following is a 28-amino-acid chain: Cycloviolin-B (28 aa).

Positions 1 to 28 (GTACGESCYVLPCFTVGCTCTSSQCFKN) form a cross-link, cyclopeptide (Gly-Asn). Disulfide bonds link cysteine 4/cysteine 18, cysteine 8/cysteine 20, and cysteine 13/cysteine 25.

In terms of processing, this is a cyclic peptide.

Its function is as follows. Probably participates in a plant defense mechanism. Has anti-HIV activity. The sequence is that of Cycloviolin-B from Leonia cymosa (Sacha uba).